Reading from the N-terminus, the 300-residue chain is L-arabinolactonase (300 aa).

A divalent metal cation contacts are provided by Glu22, Asn156, and Asp205.

Belongs to the SMP-30/CGR1 family. Requires a divalent metal cation as cofactor.

It carries out the reaction L-arabinono-1,4-lactone + H2O = L-arabinonate + H(+). Its function is as follows. Catalyzes the cleavage of L-arabino-gamma-lactone to L-arabonate. Is involved in a degradation pathway of L-arabinose that allows A.brasilense to grow on L-arabinose as a sole carbon source. Can also use D-galactono-1,4-lactone as substrate in vitro; however, the enzyme is probably not involved in the metabolism of D-galactose in vivo. The protein is L-arabinolactonase (araB) of Azospirillum brasilense.